A 201-amino-acid chain; its full sequence is Desiccation-related protein PCC3-06 (201 aa).

The span at 41–54 (TVASQSQGRQQVSE) shows a compositional bias: polar residues. 2 disordered regions span residues 41 to 155 (TVAS…QNVK) and 177 to 201 (MGKSEEVKNQAEHETKKRSTSTNYF). Composition is skewed to basic and acidic residues over residues 57-76 (EDAKKKFSETTDSLKHKTSE), 108-144 (GELKDKTQEGAENVREKAMDAGNDAMEKTRNAGERVA), and 177-193 (MGKSEEVKNQAEHETKK).

The protein belongs to the LEA type 1 family.

This chain is Desiccation-related protein PCC3-06, found in Craterostigma plantagineum (Blue gem).